A 166-amino-acid chain; its full sequence is Interferon gamma (166 aa).

The signal sequence occupies residues 1 to 23 (MNYTSYILAFQLCVILGSSGCYC). Gln-24 carries the post-translational modification Pyrrolidone carboxylic acid. Asn-39 and Asn-106 each carry an N-linked (GlcNAc...) asparagine glycan.

This sequence belongs to the type II (or gamma) interferon family. Homodimer. Interacts with IFNGR1 (via extracellular domain); this interaction promotes IFNGR1 dimerization. As to expression, released primarily from activated T lymphocytes.

Its subcellular location is the secreted. Its function is as follows. Type II interferon produced by immune cells such as T-cells and NK cells that plays crucial roles in antimicrobial, antiviral, and antitumor responses by activating effector immune cells and enhancing antigen presentation. Primarily signals through the JAK-STAT pathway after interaction with its receptor IFNGR1 to affect gene regulation. Upon IFNG binding, IFNGR1 intracellular domain opens out to allow association of downstream signaling components JAK2, JAK1 and STAT1, leading to STAT1 activation, nuclear translocation and transcription of IFNG-regulated genes. Many of the induced genes are transcription factors such as IRF1 that are able to further drive regulation of a next wave of transcription. Plays a role in class I antigen presentation pathway by inducing a replacement of catalytic proteasome subunits with immunoproteasome subunits. In turn, increases the quantity, quality, and repertoire of peptides for class I MHC loading. Increases the efficiency of peptide generation also by inducing the expression of activator PA28 that associates with the proteasome and alters its proteolytic cleavage preference. Up-regulates as well MHC II complexes on the cell surface by promoting expression of several key molecules such as cathepsins B/CTSB, H/CTSH, and L/CTSL. Participates in the regulation of hematopoietic stem cells during development and under homeostatic conditions by affecting their development, quiescence, and differentiation. This is Interferon gamma (IFNG) from Camelus bactrianus (Bactrian camel).